The chain runs to 448 residues: N-succinylarginine dihydrolase (448 aa).

Substrate-binding positions include 19-28 (GGLSYGNVAS), Asn-110, and 137-138 (HR). Glu-174 is an active-site residue. Arg-214 is a substrate binding site. Residue His-250 is part of the active site. The substrate site is built by Asp-252 and Asn-365. Catalysis depends on Cys-371, which acts as the Nucleophile.

The protein belongs to the succinylarginine dihydrolase family. As to quaternary structure, homodimer.

The enzyme catalyses N(2)-succinyl-L-arginine + 2 H2O + 2 H(+) = N(2)-succinyl-L-ornithine + 2 NH4(+) + CO2. It participates in amino-acid degradation; L-arginine degradation via AST pathway; L-glutamate and succinate from L-arginine: step 2/5. Its function is as follows. Catalyzes the hydrolysis of N(2)-succinylarginine into N(2)-succinylornithine, ammonia and CO(2). This Ectopseudomonas mendocina (strain ymp) (Pseudomonas mendocina) protein is N-succinylarginine dihydrolase.